The primary structure comprises 360 residues: UPF0324 membrane protein DVU_0123 (360 aa).

10 consecutive transmembrane segments (helical) span residues valine 20–proline 42, lysine 57–phenylalanine 79, serine 100–phenylalanine 122, alanine 142–valine 164, methionine 171–glycine 193, phenylalanine 203–serine 225, alanine 232–alanine 254, phenylalanine 278–leucine 297, glutamate 310–serine 327, and phenylalanine 337–methionine 359.

This sequence belongs to the UPF0324 family.

Its subcellular location is the cell membrane. This Nitratidesulfovibrio vulgaris (strain ATCC 29579 / DSM 644 / CCUG 34227 / NCIMB 8303 / VKM B-1760 / Hildenborough) (Desulfovibrio vulgaris) protein is UPF0324 membrane protein DVU_0123.